A 319-amino-acid polypeptide reads, in one-letter code: MGEEVKPEAKEAASAPQAVPAEEEEKKKDVAEEKKVAAEEEKPKEEEEPQPPPPPPPFILYVDLHCVGCAKKIERSILKIRGVEEVVMDMNENQVTIKGVLDPQAVCNKIKKKTKRMAKVLSPLPAAEGEPLPPIITSQVSGGLTTVELSVNMHCQACADQLKKKILKMRGVQTTVTEHTTGKVIVTGTMDAEKLVDYVYRRTKKQARIVPQPDPEPEAPAAAQEEKKEESGEGNEKPPETGEEKEEEKKKEGEENGEEGGGEEAAATEEERRDNEMTAMAQEEGMKRMMYYYQPSYVIERIPPPQLFSDENPNACCIS.

Composition is skewed to basic and acidic residues over residues 1 to 11 and 24 to 45; these read MGEEVKPEAKE and EEKK…KPKE. Residues 1–57 are disordered; that stretch reads MGEEVKPEAKEAASAPQAVPAEEEEKKKDVAEEKKVAAEEEKPKEEEEPQPPPPPPP. The stretch at 21–48 forms a coiled coil; the sequence is AEEEEKKKDVAEEKKVAAEEEKPKEEEE. HMA domains lie at 55-118 and 144-208; these read PPPF…KRMA and LTTV…KQAR. 4 residues coordinate a metal cation: Cys-66, Cys-69, Cys-155, and Cys-158. The interval 207–282 is disordered; sequence ARIVPQPDPE…RDNEMTAMAQ (76 aa). Residues 224-254 show a composition bias toward basic and acidic residues; sequence QEEKKEESGEGNEKPPETGEEKEEEKKKEGE. A compositionally biased stretch (acidic residues) spans 255 to 268; it reads ENGEEGGGEEAAAT. Cys-316 is subject to Cysteine methyl ester. A lipid anchor (S-farnesyl cysteine) is attached at Cys-316. Positions 317-319 are cleaved as a propeptide — removed in mature form; that stretch reads CIS.

The protein belongs to the HIPP family.

Functionally, heavy-metal-binding protein. The sequence is that of Heavy metal-associated isoprenylated plant protein 9 from Arabidopsis thaliana (Mouse-ear cress).